The sequence spans 931 residues: Mitochondrial cox1 translation regulator ppr4 (931 aa).

The N-terminal 16 residues, 1–16, are a transit peptide targeting the mitochondrion; the sequence is MSKSFAYRHIWCFWRF. PPR repeat units lie at residues 247–277, 282–316, 429–461, 462–496, 497–531, 598–632, and 683–713; these read NEVL…MYRT, SFTA…RPKI, HLLN…KIKV, DERT…GIKT, SNQA…GITE, NVVH…GKAP, and PPSL…YLEY.

Component of the MRH5C complex, composed of mrh5, ppr4, mtf2, and sls1. Proteins mtf2 and sls1 form a subcomplex that serves as a scaffold to bring mrh5 and ppr4 together. The MRH5C complex associates with the small subunit of the mitochondrial ribosome.

The protein localises to the mitochondrion. Functionally, RNA-binding translation activation factor that as part of the MRH5C complex specifically recruits cox1 mRNA to the mitochondrial ribosome for translation initiation. In Schizosaccharomyces pombe (strain 972 / ATCC 24843) (Fission yeast), this protein is Mitochondrial cox1 translation regulator ppr4.